Consider the following 83-residue polypeptide: Turripeptide Lol11.1 (83 aa).

A signal peptide spans 1–27 (MARQMMTVGCLILIVVLLDMMVPVFNT).

Belongs to the conopeptide I2-like superfamily. In terms of processing, contains 4 disulfide bonds. In terms of tissue distribution, expressed by the venom duct.

It localises to the secreted. In terms of biological role, acts as a neurotoxin by inhibiting voltage-gated potassium channels (Kv). This chain is Turripeptide Lol11.1, found in Iotyrris olangoensis (Sea snail).